A 6631-amino-acid chain; its full sequence is Replicase polyprotein 1ab (6631 aa).

Residues 1-1752 are Cytoplasmic-facing; that stretch reads MASSLKQGVS…VSSYKIVLCK (1752 aa). 2 Ubiquitin-like domains span residues 675-780 and 1177-1229; these read KTVT…RDYE and CKQK…ILFI. Residues 1005–1181 enclose the Macro domain; it reads VKPATCEKPK…YFDATCKQKT (177 aa). The Peptidase C16 domain occupies 1238-1499; that stretch reads EYYGLDAQKY…AKVVKEDVSN (262 aa). The active-site For PL-PRO activity is the cysteine 1276. Residues 1355-1392 form a C4-type; degenerate zinc finger; that stretch reads CNCGVKSYELRGLEACIQPVRAPNLLHFKTQYSNCPTC. Residues histidine 1439 and aspartate 1450 each act as for PL-PRO activity in the active site. Residues 1753–1773 form a helical membrane-spanning segment; the sequence is VVFATLLIVWFIYTSNPVVFT. An HD1 region spans residues 1753-1866; it reads VVFATLLIVW…KPVAGFVIIC (114 aa). In terms of domain architecture, 3Ecto spans 1771–1835; sequence VFTGIRVLDF…AYSVEQIYKD (65 aa). Topologically, residues 1774 to 1845 are lumenal; the sequence is GIRVLDFLFE…AASGINFNWN (72 aa). 2 disulfides stabilise this stretch: cysteine 1787–cysteine 1813 and cysteine 1804–cysteine 1810. Residues 1846-1866 form a helical membrane-spanning segment; the sequence is WLYLVFLILFVKPVAGFVIIC. Topologically, residues 1867–2282 are cytoplasmic; it reads YCVKYLVLSS…TFKWFMSCFK (416 aa). Residues 1913 to 2003 form a Y1 region; it reads YVQVHHILYC…KLKRHVKPTA (91 aa). In terms of domain architecture, CoV Nsp3 Y spans 1913–2265; that stretch reads YVQVHHILYC…HTQKLLVEKK (353 aa). 8 residues coordinate Zn(2+): histidine 1917, cysteine 1922, cysteine 1927, cysteine 1930, cysteine 1963, histidine 1966, cysteine 1970, and cysteine 1973. The interval 1917-1930 is ZF1; that stretch reads HHILYCKDVTCEVC. A ZF2 region spans residues 1963-1973; that stretch reads CKRHNWYCRNC. Residues 2004–2106 are Y2; sequence YAYHVVYEAC…ILDQALYEQL (103 aa). The tract at residues 2004-2265 is coV-Y; the sequence is YAYHVVYEAC…HTQKLLVEKK (262 aa). Residues 2107-2165 form a Y3 region; the sequence is IVEPVSKSVIDKVCSILSNIISVDTAALNYKAGTLRDALLSITKDEEAVDMAIFCHNHE. Positions 2166–2265 are Y4; it reads VEYTGDGFTN…HTQKLLVEKK (100 aa). The helical transmembrane segment at 2283–2303 threads the bilayer; that stretch reads WLFVFYILFTACCLGYYYMEM. The interval 2283–2666 is HD2; it reads WLFVFYILFT…LACCYLGFIL (384 aa). Residues 2304–2561 lie on the Lumenal side of the membrane; that stretch reads NKSFVHPMYD…FFTGVNPNIY (258 aa). Residues 2562 to 2582 traverse the membrane as a helical segment; the sequence is IQLATMFLILVVIVLIFAMVI. Residues 2583–2613 are Cytoplasmic-facing; that stretch reads KFQGVFKAYATIVFTIMLVWVINAFVLCVHS. Residues 2614–2634 traverse the membrane as a helical segment; the sequence is YNSVLAVILLVLYCYASMVTS. Residues 2635–2645 are Lumenal-facing; that stretch reads RNTAIIMHCWL. The chain crosses the membrane as a helical span at residues 2646-2666; the sequence is VFTFGLIVPTWLACCYLGFIL. At 2667 to 3098 the chain is on the cytoplasmic side; sequence YMYTPLVFWC…SSFVRKATSW (432 aa). Residues 2686–2781 enclose the Nsp4C domain; sequence LYDGNEFVGN…RYSIGVSRLQ (96 aa). The region spanning 2782 to 3088 is the Peptidase C30 domain; sequence AGFKKLVSPS…FNQVGGVRLQ (307 aa). Catalysis depends on for 3CL-PRO activity residues histidine 2822 and cysteine 2924. Residues 3099 to 3119 form a helical membrane-spanning segment; that stretch reads FWSRCVLACFLFVLCAIVLFT. Residues 3099 to 3319 are HD3; the sequence is FWSRCVLACF…WLCTCYFGLY (221 aa). Over 3120 to 3123 the chain is Lumenal; sequence AVPL. The helical transmembrane segment at 3124 to 3144 threads the bilayer; the sequence is KFYVHAAVILLMAVLFISFTV. Over 3145 to 3153 the chain is Cytoplasmic; it reads KHVMAYMDT. The helical transmembrane segment at 3154 to 3174 threads the bilayer; it reads FLLPTLITVIIGVCAEVPFIY. The Lumenal segment spans residues 3175–3190; the sequence is NTLISQVVIFLSQWYD. Residues 3191–3211 traverse the membrane as a helical segment; the sequence is PVVFDTMVPWMLLPLVLYTAF. Over 3212–3259 the chain is Cytoplasmic; the sequence is KCVQGCYMNSFNTSLLMLYQFMKLGFVIYTSSNTLTAYTEGNWELFFE. A helical membrane pass occupies residues 3260-3280; the sequence is LVHTIVLANVSSNSLIGLIVF. The Lumenal portion of the chain corresponds to 3281 to 3298; sequence KCAKWMLYYCNATYFNNY. Residues 3299–3319 form a helical membrane-spanning segment; the sequence is VLMAVMVNGIGWLCTCYFGLY. Residues 3320-6631 lie on the Cytoplasmic side of the membrane; that stretch reads WWVNKVFGLT…FTSDSFVCTM (3312 aa). The RdRp Nsp7 cofactor domain occupies 3382 to 3464; it reads SKLSDVKCTT…DILKRSTVLQ (83 aa). Residues 3465 to 3674 enclose the RdRp Nsp8 cofactor domain; the sequence is SVTQEFSHIP…GHNKVDVALQ (210 aa). The 111-residue stretch at 3675–3785 folds into the Nsp9 ssRNA-binding domain; that stretch reads NNELMPHGVK…GAISNVVVLQ (111 aa). The 142-residue stretch at 3787–3928 folds into the ExoN/MTase coactivator domain; that stretch reads KGHETEEVDA…CDSLRQPKPS (142 aa). Residues cysteine 3860, cysteine 3863, histidine 3869, cysteine 3880, cysteine 3906, cysteine 3909, cysteine 3917, and cysteine 3919 each coordinate Zn(2+). Zinc fingers lie at residues 3860–3880 and 3906–3919; these read CLYC…DGRC and CTVC…GCQC. In terms of domain architecture, NiRAN spans 3942 to 4200; sequence YLNRVRGSSE…APERYFEYDV (259 aa). The Nsp12 Interface domain occupies 4205 to 4303; it reads KSYDLLKYDY…MNQDNTMSFS (99 aa). Residues histidine 4234, cysteine 4240, cysteine 4245, cysteine 4249, and cysteine 4426 each coordinate Zn(2+). The Nsp12 RNA-dependent RNA polymerase domain occupies 4304 to 4870; it reads KMGLSQLMQF…NMYRAPTTLQ (567 aa). Positions 4306 to 4519 are rdRp Fingers N-ter; that stretch reads GLSQLMQFVG…HQKILKSIVN (214 aa). The rdRp Palm N-ter stretch occupies residues 4520–4558; that stretch reads TRNAPVVIGTTKFYGGWDNMLRNLIQGVEDPILMGWDYP. Residues 4550-4712 enclose the RdRp catalytic domain; the sequence is PILMGWDYPK…CYNNTLAKQG (163 aa). The rdRp Fingers C-ter stretch occupies residues 4559–4617; it reads KCDRAMPNLLRIAASLVLARKHTNCCTWSERVYRLYNECAQVLSETVLATGGIYVKPGG. Residues histidine 4580, cysteine 4583, and cysteine 4584 each coordinate Zn(2+). A rdRp Palm C-ter region spans residues 4618–4753; it reads TSSGDATTAY…EKGPHEFCSQ (136 aa). Active-site residues include serine 4697, aspartate 4698, and aspartate 4699. Positions 4754 to 4870 are rdRp Thumb; it reads HTMLVEVDGE…NMYRAPTTLQ (117 aa). One can recognise a CV ZBD domain in the interval 4871–4983; that stretch reads SCGVCVVCNS…DDFNQLATTN (113 aa). 12 residues coordinate Zn(2+): cysteine 4875, cysteine 4878, cysteine 4886, cysteine 4889, cysteine 4896, cysteine 4899, histidine 4903, histidine 4909, cysteine 4920, cysteine 4925, cysteine 4942, and histidine 4945. The region spanning 5127–5307 is the (+)RNA virus helicase ATP-binding domain; sequence MVPACFVNNI…MVCVKPDIFL (181 aa). Position 5152–5159 (5152–5159) interacts with ATP; that stretch reads GPPGSGKS. Residues 5308-5479 form the (+)RNA virus helicase C-terminal domain; sequence AKCYRCPKEI…QGTGLFKICN (172 aa). The 215-residue stretch at 5541-5755 folds into the ExoN domain; it reads MFITRDEAIR…RCLAINNAFC (215 aa). Active-site residues include aspartate 5559, glutamate 5561, and glutamate 5660. Zn(2+) contacts are provided by cysteine 5676, cysteine 5678, cysteine 5694, histidine 5697, histidine 5725, cysteine 5729, and histidine 5732. Active-site residues include histidine 5736 and aspartate 5741. Cysteine 5747 lines the Zn(2+) pocket. Positions 5764-5991 constitute an N7-MTase domain; sequence YPHIANEDEV…NLWKSFSALQ (228 aa). S-adenosyl-L-methionine is bound at residue 5799 to 5805; it reads DIGNPKG. The gpppA-binding stretch occupies residues 5879–5893; the sequence is CNGGSLYVNKHAFHT. Residues cysteine 5917, cysteine 5937, cysteine 5948, and histidine 5951 each coordinate Zn(2+). The Nsp15 N-terminal oligomerization domain occupies 5992–6052; the sequence is SIDNIAYNMY…SVAFELYAKR (61 aa). The 116-residue stretch at 6053-6168 folds into the AV-Nsp11N/CoV-Nsp15M domain; that stretch reads NIRTLPNNRI…VYKRVNGAFV (116 aa). In terms of domain architecture, NendoU spans 6185 to 6326; that stretch reads EPRSDVERDF…EDGIIKTCYP (142 aa). Active-site residues include histidine 6214, histidine 6229, lysine 6269, lysine 6373, aspartate 6457, lysine 6501, and glutamate 6534. The region spanning 6329 to 6628 is the Nidovirus-type SAM-dependent 2'-O-MTase domain; the sequence is QSAWTCGYNM…NTSFTSDSFV (300 aa).

The protein belongs to the coronaviruses polyprotein 1ab family. In terms of assembly, interacts with host PHB and PHB2. Interacts with papain-like protease and non-structural protein 6. As to quaternary structure, monomer. Homodimer. Only the homodimer shows catalytic activity. In terms of assembly, eight copies of nsp7 and eight copies of nsp8 assemble to form a heterohexadecamer dsRNA-encircling ring structure. Eight copies of nsp7 and eight copies of nsp8 assemble to form a heterohexadecamer dsRNA-encircling ring structure. Interacts with ORF6 protein. As to quaternary structure, homodimer. In terms of assembly, homododecamer. Interacts with proofreading exoribonuclease nsp14 and 2'-O-methyltransferase nsp16; these interactions enhance nsp14 and nsp16 enzymatic activities. Interacts with host DDX1 (via C-terminus). Interacts with non-structural protein 10. As to quaternary structure, homohexamer. In terms of assembly, interacts with non-structural protein 10. It depends on Mn(2+) as a cofactor. Zn(2+) serves as cofactor. Post-translationally, specific enzymatic cleavages in vivo by its own proteases yield mature proteins. 3C-like proteinase nsp5 liberates nsps 6-16 from the polyprotein. Papain-like and 3C-like proteinases are autocatalytically processed. N-glycosylated.

The protein localises to the host endoplasmic reticulum membrane. The protein resides in the host cytoplasm. It is found in the host perinuclear region. It localises to the host endoplasmic reticulum. Its subcellular location is the host endoplasmic reticulum-Golgi intermediate compartment. The catalysed reaction is Thiol-dependent hydrolysis of ester, thioester, amide, peptide and isopeptide bonds formed by the C-terminal Gly of ubiquitin (a 76-residue protein attached to proteins as an intracellular targeting signal).. It carries out the reaction RNA(n) + a ribonucleoside 5'-triphosphate = RNA(n+1) + diphosphate. The enzyme catalyses ATP + H2O = ADP + phosphate + H(+). It catalyses the reaction a 5'-end diphospho-ribonucleoside in mRNA + GTP + H(+) = a 5'-end (5'-triphosphoguanosine)-ribonucleoside in mRNA + diphosphate. The catalysed reaction is uridylyl-uridylyl-ribonucleotide-RNA = a 3'-end uridylyl-2',3'-cyclophospho-uridine-RNA + a 5'-end dephospho-ribonucleoside-RNA. It carries out the reaction a 5'-end (N(7)-methyl 5'-triphosphoguanosine)-ribonucleoside in mRNA + S-adenosyl-L-methionine = a 5'-end (N(7)-methyl 5'-triphosphoguanosine)-(2'-O-methyl-ribonucleoside) in mRNA + S-adenosyl-L-homocysteine + H(+). Functionally, multifunctional protein involved in the transcription and replication of viral RNAs. Contains the proteinases responsible for the cleavages of the polyprotein. In terms of biological role, may play a role in the modulation of host cell survival signaling pathway by interacting with host PHB and PHB2. Indeed, these two proteins play a role in maintaining the functional integrity of the mitochondria and protecting cells from various stresses. Its function is as follows. Responsible for the cleavages located at the N-terminus of the replicase polyprotein. In addition, PL-PRO possesses a deubiquitinating/deISGylating activity and processes both 'Lys-48'- and 'Lys-63'-linked polyubiquitin chains from cellular substrates. Plays a role in host membrane rearrangement that leads to creation of cytoplasmic double-membrane vesicles (DMV) necessary for viral replication. Alone is able to induce paired membranes. Coexpression of nsp3 and nsp4 does not result in the formation of DMVs. Functionally, responsible for the majority of cleavages as it cleaves the C-terminus of replicase polyprotein at 11 sites. Recognizes substrates containing the core sequence [ILMVF]-Q-|-[SGACN]. Inhibited by the substrate-analog Cbz-Val-Asn-Ser-Thr-Leu-Gln-CMK. In terms of biological role, forms a hexadecamer with nsp8 (8 subunits of each) that may participate in viral replication by acting as a primase. Alternatively, may synthesize substantially longer products than oligonucleotide primers. Its function is as follows. Forms a hexadecamer with nsp7 (8 subunits of each) that may participate in viral replication by acting as a primase. Alternatively, may synthesize substantially longer products than oligonucleotide primers. Forms a primer, NSP9-pU, which is utilized by the polymerase for the initiation of RNA chains. Interacts with ribosome signal recognition particle RNA (SRP). Together with NSP8, suppress protein integration into the cell membrane, thereby disrupting host immune defenses. Functionally, plays a pivotal role in viral transcription by stimulating both nsp14 3'-5' exoribonuclease and nsp16 2'-O-methyltransferase activities. Therefore plays an essential role in viral mRNAs cap methylation. In terms of biological role, RNA-directed RNA polymerase that catalyzes the transcription of viral genomic and subgenomic RNAs. Acts in complex with nsp7 and nsp8 to transcribe both the minus and positive strands of genomic RNA. The kinase-like NiRAN domain of NSP12 attaches one or more nucleotides to the amino terminus of NSP9, forming a covalent RNA-protein intermediate that serves as transcription/replication primer. Subgenomic RNAs (sgRNAs) are formed by discontinuous transcription: The polymerase has the ability to pause at transcription-regulating sequences (TRS) and jump to the leader TRS, resulting in a major deletion. This creates a series of subgenomic RNAs that are replicated, transcribed and translated. In addition, Nsp12 is a subunit of the viral RNA capping enzyme that catalyzes the RNA guanylyltransferase reaction for genomic and sub-genomic RNAs. Subsequently, the NiRAN domain transfers RNA to GDP, and forms the core cap structure GpppA-RNA. Its function is as follows. Multi-functional protein with a zinc-binding domain in N-terminus displaying RNA and DNA duplex-unwinding activities with 5' to 3' polarity. Activity of helicase is dependent on magnesium. Enzyme possessing two different activities: an exoribonuclease activity acting on both ssRNA and dsRNA in a 3' to 5' direction and a N7-guanine methyltransferase activity. Acts as a proofreading exoribonuclease for RNA replication, thereby lowering The sensitivity of the virus to RNA mutagens. Functionally, plays a role in viral transcription/replication and prevents the simultaneous activation of host cell dsRNA sensors, such as MDA5/IFIH1, OAS, and PKR. Acts by degrading the 5'-polyuridines generated during replication of the poly(A) region of viral genomic and subgenomic RNAs. Catalyzes a two-step reaction in which a 2'3'-cyclic phosphate (2'3'-cP) is first generated by 2'-O transesterification, which is then hydrolyzed to a 3'-phosphate (3'-P). If not degraded, poly(U) RNA would hybridize with poly(A) RNA tails and activate host dsRNA sensors. In terms of biological role, methyltransferase that mediates mRNA cap 2'-O-ribose methylation to the 5'-cap structure of viral mRNAs. N7-methyl guanosine cap is a prerequisite for binding of nsp16. Therefore plays an essential role in viral mRNAs cap methylation which is essential to evade immune system. The chain is Replicase polyprotein 1ab (rep) from Gallus gallus (Chicken).